A 263-amino-acid chain; its full sequence is Imidazole glycerol phosphate synthase subunit HisF (263 aa).

Catalysis depends on residues Asp11 and Asp130.

It belongs to the HisA/HisF family. Heterodimer of HisH and HisF.

It is found in the cytoplasm. The enzyme catalyses 5-[(5-phospho-1-deoxy-D-ribulos-1-ylimino)methylamino]-1-(5-phospho-beta-D-ribosyl)imidazole-4-carboxamide + L-glutamine = D-erythro-1-(imidazol-4-yl)glycerol 3-phosphate + 5-amino-1-(5-phospho-beta-D-ribosyl)imidazole-4-carboxamide + L-glutamate + H(+). It functions in the pathway amino-acid biosynthesis; L-histidine biosynthesis; L-histidine from 5-phospho-alpha-D-ribose 1-diphosphate: step 5/9. In terms of biological role, IGPS catalyzes the conversion of PRFAR and glutamine to IGP, AICAR and glutamate. The HisF subunit catalyzes the cyclization activity that produces IGP and AICAR from PRFAR using the ammonia provided by the HisH subunit. This chain is Imidazole glycerol phosphate synthase subunit HisF, found in Synechococcus sp. (strain CC9311).